The following is a 546-amino-acid chain: Interleukin-20 receptor subunit alpha (546 aa).

Residues methionine 1–alanine 32 form the signal peptide. Topologically, residues valine 33–lysine 253 are extracellular. 2 consecutive Fibronectin type-III domains span residues lysine 42–threonine 138 and glutamine 139–valine 245. 5 N-linked (GlcNAc...) asparagine glycosylation sites follow: asparagine 45, asparagine 86, asparagine 94, asparagine 185, and asparagine 203. A disulfide bridge connects residues cysteine 90 and cysteine 98. Cysteines 218 and 239 form a disulfide. The helical transmembrane segment at valine 254–tyrosine 274 threads the bilayer. The Cytoplasmic portion of the chain corresponds to leucine 275–serine 546.

Belongs to the type II cytokine receptor family. Heterodimer with IL20RB and heterodimer with IL10RB.

It localises to the membrane. Its function is as follows. The IL20RA/IL20RB dimer is a receptor for IL19, IL20 and IL24. The IL20RA/IL10RB dimer is a receptor for IL26. The sequence is that of Interleukin-20 receptor subunit alpha (Il20ra) from Mus musculus (Mouse).